Consider the following 379-residue polypeptide: Sulfate adenylyltransferase (379 aa).

It belongs to the sulfate adenylyltransferase family.

It catalyses the reaction sulfate + ATP + H(+) = adenosine 5'-phosphosulfate + diphosphate. It participates in sulfur metabolism; hydrogen sulfide biosynthesis; sulfite from sulfate: step 1/3. In Thermococcus onnurineus (strain NA1), this protein is Sulfate adenylyltransferase.